The sequence spans 490 residues: Dual specificity protein kinase CLK3 (490 aa).

Positions 1–138 (MHHCKRYRSP…SKRSSRSVED (138 aa)) are disordered. The residue at position 7 (Tyr7) is a Phosphotyrosine. A phosphoserine mark is found at Ser9, Ser49, Ser51, Ser67, Ser76, and Ser78. 2 stretches are compositionally biased toward basic and acidic residues: residues 26–56 (YSRE…DRIP) and 63–76 (EHRD…EERS). Residues 88-116 (RSRHRRRSRERAPYRTRKHAHHCHKRRTR) are compositionally biased toward basic residues. Low complexity predominate over residues 117–130 (SCSSASSRSQQSSK). At Ser135 the chain carries Phosphoserine. Positions 156 to 472 (YEIVGNLGEG…LAEALLHPFF (317 aa)) constitute a Protein kinase domain. ATP is bound by residues 162–170 (LGEGTFGKV) and Lys186. Asp283 acts as the Proton acceptor in catalysis.

The protein belongs to the protein kinase superfamily. CMGC Ser/Thr protein kinase family. Lammer subfamily. Post-translationally, autophosphorylates on all three types of residues. Present at high levels in testis and ovary. In testis, expression is restricted to elongated, maturing spermatozoa. Also present in spleen, brain, lung and liver (at protein level).

Its subcellular location is the nucleus. The protein localises to the cytoplasm. It is found in the cytoplasmic vesicle. The protein resides in the secretory vesicle. It localises to the acrosome. It carries out the reaction L-seryl-[protein] + ATP = O-phospho-L-seryl-[protein] + ADP + H(+). It catalyses the reaction L-threonyl-[protein] + ATP = O-phospho-L-threonyl-[protein] + ADP + H(+). The enzyme catalyses L-tyrosyl-[protein] + ATP = O-phospho-L-tyrosyl-[protein] + ADP + H(+). Its activity is regulated as follows. Leucettine L41 inhibits its kinase activity and affects the regulation of alternative splicing mediated by phosphorylation of SR proteins. Dual specificity kinase acting on both serine/threonine and tyrosine-containing substrates. Phosphorylates serine- and arginine-rich (SR) proteins of the spliceosomal complex. May be a constituent of a network of regulatory mechanisms that enable SR proteins to control RNA splicing and can cause redistribution of SR proteins from speckles to a diffuse nucleoplasmic distribution. Phosphorylates SRSF1 and SRSF3. Regulates the alternative splicing of tissue factor (F3) pre-mRNA in endothelial cells. This chain is Dual specificity protein kinase CLK3, found in Mus musculus (Mouse).